A 200-amino-acid chain; its full sequence is Dephospho-CoA kinase (200 aa).

The DPCK domain maps to 4-200; that stretch reads VIGLTGGIAS…VILKNWNIID (197 aa). 12–17 is an ATP binding site; the sequence is ASGKST.

The protein belongs to the CoaE family.

The protein localises to the cytoplasm. The enzyme catalyses 3'-dephospho-CoA + ATP = ADP + CoA + H(+). Its pathway is cofactor biosynthesis; coenzyme A biosynthesis; CoA from (R)-pantothenate: step 5/5. Its function is as follows. Catalyzes the phosphorylation of the 3'-hydroxyl group of dephosphocoenzyme A to form coenzyme A. This chain is Dephospho-CoA kinase, found in Bacillus cereus (strain ATCC 10987 / NRS 248).